The following is a 239-amino-acid chain: Phosphoribosylaminoimidazole-succinocarboxamide synthase (239 aa).

It belongs to the SAICAR synthetase family.

The catalysed reaction is 5-amino-1-(5-phospho-D-ribosyl)imidazole-4-carboxylate + L-aspartate + ATP = (2S)-2-[5-amino-1-(5-phospho-beta-D-ribosyl)imidazole-4-carboxamido]succinate + ADP + phosphate + 2 H(+). The protein operates within purine metabolism; IMP biosynthesis via de novo pathway; 5-amino-1-(5-phospho-D-ribosyl)imidazole-4-carboxamide from 5-amino-1-(5-phospho-D-ribosyl)imidazole-4-carboxylate: step 1/2. This is Phosphoribosylaminoimidazole-succinocarboxamide synthase from Campylobacter hominis (strain ATCC BAA-381 / DSM 21671 / CCUG 45161 / LMG 19568 / NCTC 13146 / CH001A).